Reading from the N-terminus, the 205-residue chain is Pyridoxine/pyridoxamine 5'-phosphate oxidase (205 aa).

Residues 53-58 (RMVLLK), 68-69 (YT), Lys-75, and Gln-97 contribute to the FMN site. Lys-58 lines the substrate pocket. Substrate-binding residues include Tyr-115, Arg-119, and Ser-123. FMN-binding positions include 132-133 (QS) and Trp-177. 183–185 (RLH) is a substrate binding site. Arg-187 serves as a coordination point for FMN.

Belongs to the pyridoxamine 5'-phosphate oxidase family. In terms of assembly, homodimer. FMN serves as cofactor.

It carries out the reaction pyridoxamine 5'-phosphate + O2 + H2O = pyridoxal 5'-phosphate + H2O2 + NH4(+). The catalysed reaction is pyridoxine 5'-phosphate + O2 = pyridoxal 5'-phosphate + H2O2. Its pathway is cofactor metabolism; pyridoxal 5'-phosphate salvage; pyridoxal 5'-phosphate from pyridoxamine 5'-phosphate: step 1/1. It functions in the pathway cofactor metabolism; pyridoxal 5'-phosphate salvage; pyridoxal 5'-phosphate from pyridoxine 5'-phosphate: step 1/1. Catalyzes the oxidation of either pyridoxine 5'-phosphate (PNP) or pyridoxamine 5'-phosphate (PMP) into pyridoxal 5'-phosphate (PLP). This chain is Pyridoxine/pyridoxamine 5'-phosphate oxidase, found in Mesorhizobium japonicum (strain LMG 29417 / CECT 9101 / MAFF 303099) (Mesorhizobium loti (strain MAFF 303099)).